Reading from the N-terminus, the 219-residue chain is Nodulation protein NolA (219 aa).

The region spanning 10–79 (RWRIGELAEA…LHEIRKAMEG (70 aa)) is the HTH merR-type domain. A DNA-binding region (H-T-H motif) is located at residues 13-32 (IGELAEATGVTVRTLHHYEH).

Its function is as follows. Involved in genotype-specific nodulation of soybeans. The chain is Nodulation protein NolA (nolA) from Bradyrhizobium elkanii.